The chain runs to 438 residues: 5-methylthioadenosine/S-adenosylhomocysteine deaminase (438 aa).

Zn(2+) is bound by residues H66 and H68. Substrate-binding residues include E95, R148, and H188. A Zn(2+)-binding site is contributed by H215. Substrate-binding residues include E218 and D305. Residue D305 participates in Zn(2+) binding.

The protein belongs to the metallo-dependent hydrolases superfamily. MTA/SAH deaminase family. Zn(2+) serves as cofactor.

The catalysed reaction is S-adenosyl-L-homocysteine + H2O + H(+) = S-inosyl-L-homocysteine + NH4(+). It catalyses the reaction S-methyl-5'-thioadenosine + H2O + H(+) = S-methyl-5'-thioinosine + NH4(+). Its function is as follows. Catalyzes the deamination of 5-methylthioadenosine and S-adenosyl-L-homocysteine into 5-methylthioinosine and S-inosyl-L-homocysteine, respectively. Is also able to deaminate adenosine. This chain is 5-methylthioadenosine/S-adenosylhomocysteine deaminase, found in Halalkalibacterium halodurans (strain ATCC BAA-125 / DSM 18197 / FERM 7344 / JCM 9153 / C-125) (Bacillus halodurans).